The following is a 95-amino-acid chain: Integration host factor subunit alpha (95 aa).

The tract at residues 51–71 (NFDLRDKNERPGRNPKTGEDI) is disordered. The segment covering 53–69 (DLRDKNERPGRNPKTGE) has biased composition (basic and acidic residues).

It belongs to the bacterial histone-like protein family. As to quaternary structure, heterodimer of an alpha and a beta chain.

Its function is as follows. This protein is one of the two subunits of integration host factor, a specific DNA-binding protein that functions in genetic recombination as well as in transcriptional and translational control. In Vibrio vulnificus (strain CMCP6), this protein is Integration host factor subunit alpha.